A 225-amino-acid chain; its full sequence is Large ribosomal subunit protein uL1 (225 aa).

It belongs to the universal ribosomal protein uL1 family. As to quaternary structure, part of the 50S ribosomal subunit.

Its function is as follows. Binds directly to 23S rRNA. The L1 stalk is quite mobile in the ribosome, and is involved in E site tRNA release. Functionally, protein L1 is also a translational repressor protein, it controls the translation of the L11 operon by binding to its mRNA. This chain is Large ribosomal subunit protein uL1, found in Rhodopirellula baltica (strain DSM 10527 / NCIMB 13988 / SH1).